A 54-amino-acid polypeptide reads, in one-letter code: uncharacterized protein (54 aa).

The segment at 1-54 (MSKKSTPMTKDAASRIQSSAAKSGGDVSSGSFASRAQSAAAINANNTSNSTGKK) is disordered. The segment covering 28–54 (SSGSFASRAQSAAAINANNTSNSTGKK) has biased composition (low complexity).

This is an uncharacterized protein from Dictyostelium discoideum (Social amoeba).